A 142-amino-acid polypeptide reads, in one-letter code: Large ribosomal subunit protein uL13 (142 aa).

Belongs to the universal ribosomal protein uL13 family. In terms of assembly, part of the 50S ribosomal subunit.

Its function is as follows. This protein is one of the early assembly proteins of the 50S ribosomal subunit, although it is not seen to bind rRNA by itself. It is important during the early stages of 50S assembly. This chain is Large ribosomal subunit protein uL13, found in Ralstonia nicotianae (strain ATCC BAA-1114 / GMI1000) (Ralstonia solanacearum).